The primary structure comprises 198 residues: tRNA (pseudouridine(54)-N(1))-methyltransferase (198 aa).

2 residues coordinate S-adenosyl-L-methionine: leucine 134 and glycine 155.

Belongs to the methyltransferase superfamily. TrmY family. As to quaternary structure, homodimer.

The protein localises to the cytoplasm. The enzyme catalyses pseudouridine(54) in tRNA + S-adenosyl-L-methionine = N(1)-methylpseudouridine(54) in tRNA + S-adenosyl-L-homocysteine + H(+). Its function is as follows. Specifically catalyzes the N1-methylation of pseudouridine at position 54 (Psi54) in tRNAs. In Thermococcus kodakarensis (strain ATCC BAA-918 / JCM 12380 / KOD1) (Pyrococcus kodakaraensis (strain KOD1)), this protein is tRNA (pseudouridine(54)-N(1))-methyltransferase.